Here is a 211-residue protein sequence, read N- to C-terminus: Thymidylate kinase (211 aa).

Position 7–14 (7–14 (GIDGCGKT)) interacts with ATP.

Belongs to the thymidylate kinase family.

The catalysed reaction is dTMP + ATP = dTDP + ADP. Phosphorylation of dTMP to form dTDP in both de novo and salvage pathways of dTTP synthesis. The sequence is that of Thymidylate kinase from Anaplasma marginale (strain St. Maries).